The sequence spans 125 residues: DCSSGWTAYGKHCYKVFDEPKTWEDAEKFCSEQANGGHLVSFRSSKEADFVVTLTAQTKESEIVWMGLSKIWNQCDWGWTNGAKLNYEAWAEAESYCVWFSSTNKEWKSRPCSLFGHFVCKSPAW.

In terms of domain architecture, C-type lectin spans aspartate 1–serine 122. Cystine bridges form between cysteine 2–cysteine 13, cysteine 30–cysteine 120, and cysteine 97–cysteine 112. Ca(2+) contacts are provided by serine 41 and glutamate 47.

Belongs to the snaclec family. Heterodimer of subunits A and B; disulfide-linked. In terms of tissue distribution, expressed by the venom gland.

It localises to the secreted. Functionally, anticoagulant protein which binds to coagulation factor IX (F9) and coagulation factor X (F10) in the presence of calcium. It may bind the gamma-carboxyglutamic acid-domain regions of factors with a 1 to 1 stoichiometry. The dissociation constant (K(d)) are 6.6 nM for factor IX (F9) and 125 nM for factor X (F10). Does not bind carbohydrates. The protein is Snaclec coagulation factor IX/factor X-binding protein subunit B of Echis carinatus (Saw-scaled viper).